We begin with the raw amino-acid sequence, 553 residues long: Chaperonin GroEL (553 aa).

Residues 29–32 (TLGP), lysine 50, 86–90 (DGTTT), glycine 424, and aspartate 504 each bind ATP.

Belongs to the chaperonin (HSP60) family. In terms of assembly, forms a cylinder of 14 subunits composed of two heptameric rings stacked back-to-back. Interacts with the co-chaperonin GroES.

It localises to the cytoplasm. It catalyses the reaction ATP + H2O + a folded polypeptide = ADP + phosphate + an unfolded polypeptide.. Its function is as follows. Together with its co-chaperonin GroES, plays an essential role in assisting protein folding. The GroEL-GroES system forms a nano-cage that allows encapsulation of the non-native substrate proteins and provides a physical environment optimized to promote and accelerate protein folding. This chain is Chaperonin GroEL, found in Koribacter versatilis (strain Ellin345).